Reading from the N-terminus, the 150-residue chain is MSKRKTKEPKVETVTLGPSVREGEQVFGVVHIFASFNDTFIHVTDLSGRETLVRITGGMKVKADRDESSPYAAMLAAQDVAQRCKELGITAMHVKLRATGGNKTKTPGPGAQSALRALARSGMKIGRIEDVTPIPTDSTRRKGGRRGRRL.

S19 is subject to Phosphoserine.

The protein belongs to the universal ribosomal protein uS11 family.

Its subcellular location is the cytoplasm. In Arabidopsis thaliana (Mouse-ear cress), this protein is Small ribosomal subunit protein uS11y (RPS14B).